The sequence spans 215 residues: Cytochrome c biogenesis ATP-binding export protein CcmA (215 aa).

An ABC transporter domain is found at 3–215; the sequence is LEAENLAGER…MAAFSVEDIA (213 aa). 35–42 is an ATP binding site; the sequence is GPNGSGKS.

Belongs to the ABC transporter superfamily. CcmA exporter (TC 3.A.1.107) family. The complex is composed of two ATP-binding proteins (CcmA) and two transmembrane proteins (CcmB).

It is found in the cell inner membrane. The enzyme catalyses heme b(in) + ATP + H2O = heme b(out) + ADP + phosphate + H(+). Part of the ABC transporter complex CcmAB involved in the biogenesis of c-type cytochromes; once thought to export heme, this seems not to be the case, but its exact role is uncertain. Responsible for energy coupling to the transport system. The polypeptide is Cytochrome c biogenesis ATP-binding export protein CcmA (Brucella melitensis biotype 1 (strain ATCC 23456 / CCUG 17765 / NCTC 10094 / 16M)).